A 116-amino-acid chain; its full sequence is DNA polymerase epsilon subunit 4 (116 aa).

A compositionally biased stretch (low complexity) spans 1-10 (MAAAAPGSGA). The tract at residues 1-36 (MAAAAPGSGAAREEEGTGGDAATPQPPAPTSAPGAR) is disordered.

As to quaternary structure, component of the DNA polymerase epsilon complex consisting of four subunits: the catalytic subunit POLE and the accessory subunits POLE2, POLE3 and POLE4. Interaction with POLE3 is a prerequisite for further binding with POLE and POLE2.

It is found in the nucleus. Its function is as follows. Accessory component of the DNA polymerase epsilon complex. Participates in DNA repair and in chromosomal DNA replication. The protein is DNA polymerase epsilon subunit 4 (POLE4) of Bos taurus (Bovine).